The sequence spans 716 residues: 1,4-alpha-glucan branching enzyme GlgB (716 aa).

Asp399 serves as the catalytic Nucleophile. Glu452 (proton donor) is an active-site residue.

It belongs to the glycosyl hydrolase 13 family. GlgB subfamily. Monomer.

The enzyme catalyses Transfers a segment of a (1-&gt;4)-alpha-D-glucan chain to a primary hydroxy group in a similar glucan chain.. The protein operates within glycan biosynthesis; glycogen biosynthesis. Catalyzes the formation of the alpha-1,6-glucosidic linkages in glycogen by scission of a 1,4-alpha-linked oligosaccharide from growing alpha-1,4-glucan chains and the subsequent attachment of the oligosaccharide to the alpha-1,6 position. The chain is 1,4-alpha-glucan branching enzyme GlgB from Rhodopseudomonas palustris (strain ATCC BAA-98 / CGA009).